The primary structure comprises 611 residues: MRLLLIHSDHIEYEARKKTKVAEEDAVQKDALDEALAVFCAVESVDEENIEDAVRQAADEIVATARQLGTTNIMIYPYAHLSSDLASPGAAVSVLKGIEGALVGTDGFVVKRAPFGWYKAFSLSCKGHPLSELSRTILPGEGAAAPKKEIEHEFFVITPEGDRKNAADYAKEETPFAALIRKELGYPGPEGAEPVHVDLMRAKELVEYEPRADVGNHRWMPRGKLIRDLLSDYVLTQVLDYGGMPVETPVMYDLGDAAIAEHAAKFGERQYRFKSGNRDMMLRFAACFGMFSIMHDMHISPNTLPMKLYELSTYSFRHEQKGEVIGLKRLRAFTMPDMHTLCRDMDGALTAFEEQLAIGWKTGEDLETPLVGVFRCTRDFFEQYELWVKGIVAKSGVPMLIEVLSERTHYWIAKVDLAAIDAQGRPIENPTVQIDVESADRFDIKYYAPDGTEVHPPILHCSPTGSIERVICAMLEGTAAQEVPSFPTWLAPTQVRLVPVAERHICFAEEIDTRLNAAGIRADVDDRDESVNKKIREAGMDWVPYVAVIGDQEAETGRLMVTIRKLSEKKKPFKESMTESELVQAVKLETAGKPFRPLYTPRLLSRKPRFI.

The tract at residues 1 to 145 (MRLLLIHSDH…TILPGEGAAA (145 aa)) is editing domain. Positions 195 to 487 (VHVDLMRAKE…TAAQEVPSFP (293 aa)) are catalytic. 3 residues coordinate Zn(2+): Cys287, His339, and His460.

The protein belongs to the class-II aminoacyl-tRNA synthetase family. Homodimer. It depends on Zn(2+) as a cofactor.

It localises to the cytoplasm. It carries out the reaction tRNA(Thr) + L-threonine + ATP = L-threonyl-tRNA(Thr) + AMP + diphosphate + H(+). Its function is as follows. Catalyzes the attachment of threonine to tRNA(Thr) in a two-step reaction: L-threonine is first activated by ATP to form Thr-AMP and then transferred to the acceptor end of tRNA(Thr). Also edits incorrectly charged L-seryl-tRNA(Thr). The chain is Threonine--tRNA ligase from Methanoculleus marisnigri (strain ATCC 35101 / DSM 1498 / JR1).